A 443-amino-acid polypeptide reads, in one-letter code: Phosphoglucosamine mutase (443 aa).

Serine 101 serves as the catalytic Phosphoserine intermediate. Positions 101, 239, 241, and 243 each coordinate Mg(2+). Serine 101 carries the phosphoserine modification.

The protein belongs to the phosphohexose mutase family. Requires Mg(2+) as cofactor. In terms of processing, activated by phosphorylation.

It carries out the reaction alpha-D-glucosamine 1-phosphate = D-glucosamine 6-phosphate. Its function is as follows. Catalyzes the conversion of glucosamine-6-phosphate to glucosamine-1-phosphate. The sequence is that of Phosphoglucosamine mutase from Francisella philomiragia subsp. philomiragia (strain ATCC 25017 / CCUG 19701 / FSC 153 / O#319-036).